A 310-amino-acid chain; its full sequence is Ornithine carbamoyltransferase (310 aa).

Residues 58–61 (STRT), Gln-85, Arg-109, and 136–139 (HPCQ) each bind carbamoyl phosphate. L-ornithine contacts are provided by residues Asn-167, Asp-227, and 231-232 (SM). Carbamoyl phosphate contacts are provided by residues 266-267 (CL) and Arg-294.

The protein belongs to the aspartate/ornithine carbamoyltransferase superfamily. OTCase family.

The protein localises to the cytoplasm. It carries out the reaction carbamoyl phosphate + L-ornithine = L-citrulline + phosphate + H(+). It functions in the pathway amino-acid biosynthesis; L-arginine biosynthesis; L-arginine from L-ornithine and carbamoyl phosphate: step 1/3. Reversibly catalyzes the transfer of the carbamoyl group from carbamoyl phosphate (CP) to the N(epsilon) atom of ornithine (ORN) to produce L-citrulline. This Rhodopseudomonas palustris (strain ATCC BAA-98 / CGA009) protein is Ornithine carbamoyltransferase.